Consider the following 136-residue polypeptide: Aspartate 1-decarboxylase (136 aa).

Ser25 serves as the catalytic Schiff-base intermediate with substrate; via pyruvic acid. Pyruvic acid (Ser) is present on Ser25. Thr57 lines the substrate pocket. Tyr58 functions as the Proton donor in the catalytic mechanism. 73-75 contributes to the substrate binding site; sequence GAA.

This sequence belongs to the PanD family. In terms of assembly, heterooctamer of four alpha and four beta subunits. It depends on pyruvate as a cofactor. In terms of processing, is synthesized initially as an inactive proenzyme, which is activated by self-cleavage at a specific serine bond to produce a beta-subunit with a hydroxyl group at its C-terminus and an alpha-subunit with a pyruvoyl group at its N-terminus.

The protein resides in the cytoplasm. The enzyme catalyses L-aspartate + H(+) = beta-alanine + CO2. It functions in the pathway cofactor biosynthesis; (R)-pantothenate biosynthesis; beta-alanine from L-aspartate: step 1/1. Catalyzes the pyruvoyl-dependent decarboxylation of aspartate to produce beta-alanine. This is Aspartate 1-decarboxylase from Corynebacterium glutamicum (strain R).